The following is a 647-amino-acid chain: Cartilage acidic protein 1 (647 aa).

The signal sequence occupies residues 1–30 (MMLPADFFVPVSKMMLLALLLSIIICCGGA). An FG-GAP 1; atypical repeat occupies 48-90 (DYDSNPTQLNYGVAITDVDNDGDFEVVVAGYNGPNLVLKYIKE). One copy of the FG-GAP 2; atypical repeat lies at 107-149 (YALRDRQGNAIGVAACDIDGDGREEIYFLNTNNAFSGIATYSD). Residues 285–335 (TGVDDVYQHGRGVALADFNRDGKVDIVYGNWNGPHRLFLQMNTNGKVRFRD) form an FG-GAP 3; atypical repeat. Residues 397–439 (GDASEPDGRGTGGAVTDFDGDGMLDLILSHGESMAQPLSVFKG) form an FG-GAP 4; atypical repeat. Positions 561-607 (DTDECIQFPFVCPREKPVCINTYGGYKCRPNRRCSRGFEPNEDGTAC) constitute an EGF-like domain. Intrachain disulfides connect Cys-565-Cys-579, Cys-572-Cys-588, and Cys-594-Cys-607.

Its subcellular location is the secreted. It localises to the extracellular space. It is found in the extracellular matrix. The sequence is that of Cartilage acidic protein 1 (crtac1) from Xenopus tropicalis (Western clawed frog).